Consider the following 519-residue polypeptide: O-fucosyltransferase 31 (519 aa).

Residues A18 to L38 form a helical; Signal-anchor for type II membrane protein membrane-spanning segment. The N-linked (GlcNAc...) asparagine glycan is linked to N131. H302–R304 lines the substrate pocket. Residues N373 and N474 are each glycosylated (N-linked (GlcNAc...) asparagine).

It belongs to the glycosyltransferase GT106 family.

The protein localises to the membrane. It functions in the pathway glycan metabolism. The polypeptide is O-fucosyltransferase 31 (Arabidopsis thaliana (Mouse-ear cress)).